The sequence spans 596 residues: Isocitrate dehydrogenase kinase/phosphatase (596 aa).

Residues 316–322 (APGIRGM) and Lys337 contribute to the ATP site. Asp372 is a catalytic residue.

This sequence belongs to the AceK family.

It localises to the cytoplasm. The catalysed reaction is L-seryl-[isocitrate dehydrogenase] + ATP = O-phospho-L-seryl-[isocitrate dehydrogenase] + ADP + H(+). Functionally, bifunctional enzyme which can phosphorylate or dephosphorylate isocitrate dehydrogenase (IDH) on a specific serine residue. This is a regulatory mechanism which enables bacteria to bypass the Krebs cycle via the glyoxylate shunt in response to the source of carbon. When bacteria are grown on glucose, IDH is fully active and unphosphorylated, but when grown on acetate or ethanol, the activity of IDH declines drastically concomitant with its phosphorylation. The sequence is that of Isocitrate dehydrogenase kinase/phosphatase from Cronobacter sakazakii (strain ATCC BAA-894) (Enterobacter sakazakii).